A 623-amino-acid polypeptide reads, in one-letter code: UvrABC system protein C (623 aa).

Positions 21 to 100 (AEPGVYLMRD…IKTHQPPYNV (80 aa)) constitute a GIY-YIG domain. Positions 210–245 (DELIRELQEKMIQAAEQENYEAAARYRDQIRGLEQL) constitute a UVR domain.

It belongs to the UvrC family. In terms of assembly, interacts with UvrB in an incision complex.

It is found in the cytoplasm. In terms of biological role, the UvrABC repair system catalyzes the recognition and processing of DNA lesions. UvrC both incises the 5' and 3' sides of the lesion. The N-terminal half is responsible for the 3' incision and the C-terminal half is responsible for the 5' incision. The sequence is that of UvrABC system protein C from Synechococcus sp. (strain JA-2-3B'a(2-13)) (Cyanobacteria bacterium Yellowstone B-Prime).